Consider the following 373-residue polypeptide: MSQSLFCDEVLPHISDIQVYQPGKPISEVQREHNLLRISKLASNENPLGASPKAIKAVQSELINMGRYPDGNSFYLKQDLADFLQKQPTEIALGNGSNELLELVARIFAGKGDEIIYSQYAFAVYSISTQAVGATGIEVPAKEWGHDLEAMAEAITDKTKLIYLANPNNPTGTLFTQKEWEAFISKVPSNVIVVLDEAYTEYVTHDEYANGLNYLEQYPNLIVSRTFSKAYGLAALRIGYMVANEELIAYINRLRAPFNINHLAQVAAKAALKDPMFVKKTVDLNTQGMQTLTQFFEEKGLSYIPSQGNFVCVDLGPDSLKINQALLKEGVIVRPVAPEGKFSEFLRISIGLPNENQHFMAALNKILTSSNFK.

N6-(pyridoxal phosphate)lysine is present on K229.

This sequence belongs to the class-II pyridoxal-phosphate-dependent aminotransferase family. Histidinol-phosphate aminotransferase subfamily. In terms of assembly, homodimer. Pyridoxal 5'-phosphate is required as a cofactor.

It carries out the reaction L-histidinol phosphate + 2-oxoglutarate = 3-(imidazol-4-yl)-2-oxopropyl phosphate + L-glutamate. The protein operates within amino-acid biosynthesis; L-histidine biosynthesis; L-histidine from 5-phospho-alpha-D-ribose 1-diphosphate: step 7/9. This Hydrogenovibrio crunogenus (strain DSM 25203 / XCL-2) (Thiomicrospira crunogena) protein is Histidinol-phosphate aminotransferase 2.